Here is a 229-residue protein sequence, read N- to C-terminus: Prolactin (229 aa).

The signal sequence occupies residues 1–30 (MDNKGWSLKGSLLFLLLLLSDLLLCKSVAS). The cysteines at positions 34 and 41 are disulfide-linked. A Phosphoserine modification is found at S56. An N-linked (GlcNAc...) asparagine glycan is attached at N61. Phosphoserine occurs at positions 64 and 120. Cystine bridges form between C88/C204 and C221/C229.

The protein belongs to the somatotropin/prolactin family. Interacts with PRLR.

The protein resides in the secreted. Its function is as follows. Prolactin acts primarily on the mammary gland by promoting lactation. In Felis catus (Cat), this protein is Prolactin (PRL).